The following is a 308-amino-acid chain: Secreted frizzled-related protein 1 (308 aa).

A signal peptide spans 1-25 (MGGGRWAAAGALLALAAGLLAAGSA). Residues 47–163 (TKPPQCVDIP…FPEGDVCIAM (117 aa)) form the FZ domain. Intrachain disulfides connect Cys52-Cys115, Cys62-Cys108, Cys99-Cys134, Cys123-Cys160, and Cys127-Cys151. N-linked (GlcNAc...) asparagine glycosylation is present at Asn167. Cystine bridges form between Cys180–Cys250, Cys183–Cys252, and Cys197–Cys300. Residues 180–300 (CPPCDNELKS…FMKKMKNHEC (121 aa)) enclose the NTR domain.

The protein belongs to the secreted frizzled-related protein (sFRP) family. Interacts with WNT1, WNT2, WNT4, WNT8, MYOC and FRZD6. As to expression, highest levels in aortic endothelium, heart, spleen and eye. Lower levels in lung, brain and kidney. Weak expression in liver, skeletal muscle and the medial layer of the aorta. In the cortical brain, localized to neurons and small blood vessels. In the retina, localized to the inner and outer nuclear layers with high expression in the neuronal cell bodies. In the heart, restricted to myocytes. In lung, highest expression found in the epithelium of terminal bronchioles. In kidney, localized to the epithelium of collecting ducts of the medulla and, in spleen, expression restricted to the red pulp in cells associated with the sinuses.

It localises to the secreted. Its function is as follows. Soluble frizzled-related proteins (sFRPS) function as modulators of Wnt signaling through direct interaction with Wnts. They have a role in regulating cell growth and differentiation in specific cell types. SFRP1 decreases intracellular beta-catenin levels. Has antiproliferative effects on vascular cells, in vitro and in vivo, and can induce, in vivo, an angiogenic response. In vascular cell cycle, delays the G1 phase and entry into the S phase. In kidney development, inhibits tubule formation and bud growth in metanephroi. Inhibits WNT1/WNT4-mediated TCF-dependent transcription. The protein is Secreted frizzled-related protein 1 (SFRP1) of Bos taurus (Bovine).